The primary structure comprises 384 residues: Terpene cyclase ascI (384 aa).

The signal sequence occupies residues 1 to 25 (MPQLAGKLILAGLIPLGAWVLHGFA). The chain crosses the membrane as a helical span at residues 82-102 (LSLHAFMFAGQGVPLLVLNML). Asn109 carries N-linked (GlcNAc...) asparagine glycosylation. The next 4 membrane-spanning stretches (helical) occupy residues 119 to 139 (VFGI…YLFL), 164 to 184 (AVGF…SLPH), 194 to 214 (VLSV…AYFA), and 235 to 255 (GAVY…TFAI). Asn258 is a glycosylation site (N-linked (GlcNAc...) asparagine). A run of 2 helical transmembrane segments spans residues 291–311 (WFLQ…AIGI) and 330–350 (IALR…ALSL). Asn372 carries an N-linked (GlcNAc...) asparagine glycan.

It belongs to the membrane-bound ascI terpene cyclase family.

The protein resides in the membrane. The catalysed reaction is 16-hydroxy-ilicicolin A epoxide = ascofuranol. It participates in secondary metabolite biosynthesis; terpenoid biosynthesis. Epoxide hydrolase; part of the asc-2 gene cluster that mediates the biosynthesis of ascofuranone, a strong inhibitor of cyanide-insensitive alternative oxidases and a promising drug candidate against African trypanosomiasis. The first step in the pathway is performed by the non-reducing polyketide synthase ascC that produces orsellinic acid by condensing acetyl-CoA with 3 malonyl-CoA units. Orsellinic acid is then prenylated by the prenyltransferase ascA to yield ilicicolinic acid B. Ilicicolinic acid B is further reduced to ilicicolin B by the reductase ascB. The halogenase ascD then chlorinates ilicicolin B to produce ilicicolin A which is converted to ilicicolin A epoxide by the cytochrome P450 monooxygenase ascE that catalyzes stereoselective epoxidation of the terminal double bond of the prenyl group. Ilicicolin A epoxide is the last common precursor for the biosynthesis of ascofuranone and ascochlorin. The terpene cyclase ascF produces a monocyclic terpene, and the cyclization reaction is proposed to be initiated by protonation of the terminal epoxide of ilicicolin A epoxide to generate a monocyclic tertiarycation, which is followed by a series of hydride and methyl shifts with abstraction of proton, leading to the formation of the (14S,15R,19R)-trimethylcyclohexanone ring structure of ilicicolin C, which is finally reduced to ascochlorin by the dehydrogenase ascG. On the other hand, ilicicolin A epoxide is hydroxylated by the cytochrome P450 monooxygenase ascH, and the resultant product is cyclized by the terpene cyclase ascI to ascofuranol via protonation-initiated epoxide ring opening, which facilitates the 6-endo-tet cyclization to form the tetrahy-drofuran ring. Finally, ascofuranol is oxidized into ascofuranone by ascJ. The chain is Terpene cyclase ascI from Acremonium egyptiacum (Oospora egyptiaca).